A 366-amino-acid chain; its full sequence is MSILILEAFYGGSHKQLVDLLQEELEDSVLYTLPAKKWHWRARTSALYFSQNIPTSEHYRILFASSVLNLTELAALRPDLGKLKKILYFHENQLVYPVKKCQERDFQYGYNQILSCLVADVVVFNSVFNMESFLTSIGKFMKLIPDHRPKDLESIIRPKCQVIYFPIRFPDVSRFMPKHKAAHLQKILSLKENGGNAPSTALPFQQQLRGSENLLKSFDSKSGPCDAAQQESLGCSVRQASYLKTFNSSDDSSTHHGEHKQNRCDVLAEADDQQRPLHIVWPHRWLEAVYCGCYPLCPKDLVYPEIFPAEYLYSTPEQLSKRLQNFCKRPDITRKHLYKGEMAPFSWAALHGKFRSLLTAEPREDL.

Belongs to the glycosyltransferase group 1 family. Glycosyltransferase 4 subfamily.

It localises to the cytoplasm. The protein localises to the nucleus. It catalyses the reaction queuosine(34) in tRNA(Asp) + GDP-alpha-D-mannose = O-4''-alpha-D-mannosylqueuosine(34) in tRNA(Asp) + GDP + H(+). Its function is as follows. Glycosyltransferase that specifically catalyzes mannosylation of cytoplasmic tRNA(Asp) modified with queuosine at position 34 (queuosine(34)). Mannosylates the cyclopentene moiety of queuosine(34) in tRNA(Asp) to form mannosyl-queuosine(34). Mannosylation of queuosine(34) in tRNA(Asp) is required to slow-down elongation at cognate codons, GAC and GAU, thereby regulating protein translation. The sequence is that of tRNA-queuosine alpha-mannosyltransferase (GTDC1) from Bos taurus (Bovine).